Reading from the N-terminus, the 125-residue chain is Small ribosomal subunit protein uS12 (125 aa).

Position 89 is a 3-methylthioaspartic acid (D89).

This sequence belongs to the universal ribosomal protein uS12 family. As to quaternary structure, part of the 30S ribosomal subunit. Contacts proteins S8 and S17. May interact with IF1 in the 30S initiation complex.

In terms of biological role, with S4 and S5 plays an important role in translational accuracy. Functionally, interacts with and stabilizes bases of the 16S rRNA that are involved in tRNA selection in the A site and with the mRNA backbone. Located at the interface of the 30S and 50S subunits, it traverses the body of the 30S subunit contacting proteins on the other side and probably holding the rRNA structure together. The combined cluster of proteins S8, S12 and S17 appears to hold together the shoulder and platform of the 30S subunit. The sequence is that of Small ribosomal subunit protein uS12 from Clostridium botulinum (strain Alaska E43 / Type E3).